The following is a 172-amino-acid chain: Interferon tau-3 (172 aa).

Intrachain disulfides connect cysteine 1-cysteine 99 and cysteine 29-cysteine 139.

Belongs to the alpha/beta interferon family. IFN-alphaII subfamily. As to expression, constitutively and exclusively expressed in the mononuclear cells of the extraembryonic trophectoderm.

The protein resides in the secreted. Its function is as follows. Paracrine hormone primarily responsible for maternal recognition of pregnancy. Interacts with endometrial receptors, probably type I interferon receptors, and blocks estrogen receptor expression, preventing the estrogen-induced increase in oxytocin receptor expression in the endometrium. This results in the suppression of the pulsatile endometrial release of the luteolytic hormone prostaglandin F2-alpha, hindering the regression of the corpus luteum (luteolysis) and therefore a return to ovarian cyclicity. This, and a possible direct effect of IFN-tau on prostaglandin synthesis, leads in turn to continued ovarian progesterone secretion, which stimulates the secretion by the endometrium of the nutrients required for the growth of the conceptus. In summary, displays particularly high antiviral and antiproliferative potency concurrently with particular weak cytotoxicity, high antiluteolytic activity and immunomodulatory properties. In contrast with other IFNs, IFN-tau is not virally inducible. The sequence is that of Interferon tau-3 (IFNT3) from Ovis aries (Sheep).